The following is a 91-amino-acid chain: Long neurotoxin LNTX28 (91 aa).

The N-terminal stretch at 1-21 is a signal peptide; it reads MKTLLLTLVVMTIVCLDLGYT. 5 disulfide bridges follow: cysteine 24–cysteine 41, cysteine 34–cysteine 62, cysteine 47–cysteine 51, cysteine 66–cysteine 77, and cysteine 78–cysteine 83.

It belongs to the three-finger toxin family. Long-chain subfamily. Type II alpha-neurotoxin sub-subfamily. As to expression, expressed by the venom gland.

It is found in the secreted. Functionally, binds with high affinity to muscular (alpha-1/CHRNA1) and neuronal (alpha-7/CHRNA7) nicotinic acetylcholine receptor (nAChR) and inhibits acetylcholine from binding to the receptor, thereby impairing neuromuscular and neuronal transmission. The sequence is that of Long neurotoxin LNTX28 from Ophiophagus hannah (King cobra).